A 205-amino-acid polypeptide reads, in one-letter code: uncharacterized protein (205 aa).

This is an uncharacterized protein from Sinorhizobium fredii (strain NBRC 101917 / NGR234).